A 602-amino-acid polypeptide reads, in one-letter code: Elongation factor 4 (602 aa).

Residues 8-190 (DLIRNFSIVA…AIVHRLPPPK (183 aa)) enclose the tr-type G domain. GTP contacts are provided by residues 20–25 (DHGKST) and 137–140 (NKID).

It belongs to the TRAFAC class translation factor GTPase superfamily. Classic translation factor GTPase family. LepA subfamily.

The protein localises to the cell inner membrane. It carries out the reaction GTP + H2O = GDP + phosphate + H(+). Its function is as follows. Required for accurate and efficient protein synthesis under certain stress conditions. May act as a fidelity factor of the translation reaction, by catalyzing a one-codon backward translocation of tRNAs on improperly translocated ribosomes. Back-translocation proceeds from a post-translocation (POST) complex to a pre-translocation (PRE) complex, thus giving elongation factor G a second chance to translocate the tRNAs correctly. Binds to ribosomes in a GTP-dependent manner. In Cereibacter sphaeroides (strain ATCC 17023 / DSM 158 / JCM 6121 / CCUG 31486 / LMG 2827 / NBRC 12203 / NCIMB 8253 / ATH 2.4.1.) (Rhodobacter sphaeroides), this protein is Elongation factor 4.